We begin with the raw amino-acid sequence, 165 residues long: Crossover junction endodeoxyribonuclease RuvC (165 aa).

Active-site residues include aspartate 7, glutamate 67, and aspartate 140. Mg(2+)-binding residues include aspartate 7, glutamate 67, and aspartate 140.

It belongs to the RuvC family. As to quaternary structure, homodimer which binds Holliday junction (HJ) DNA. The HJ becomes 2-fold symmetrical on binding to RuvC with unstacked arms; it has a different conformation from HJ DNA in complex with RuvA. In the full resolvosome a probable DNA-RuvA(4)-RuvB(12)-RuvC(2) complex forms which resolves the HJ. The cofactor is Mg(2+).

Its subcellular location is the cytoplasm. It catalyses the reaction Endonucleolytic cleavage at a junction such as a reciprocal single-stranded crossover between two homologous DNA duplexes (Holliday junction).. In terms of biological role, the RuvA-RuvB-RuvC complex processes Holliday junction (HJ) DNA during genetic recombination and DNA repair. Endonuclease that resolves HJ intermediates. Cleaves cruciform DNA by making single-stranded nicks across the HJ at symmetrical positions within the homologous arms, yielding a 5'-phosphate and a 3'-hydroxyl group; requires a central core of homology in the junction. The consensus cleavage sequence is 5'-(A/T)TT(C/G)-3'. Cleavage occurs on the 3'-side of the TT dinucleotide at the point of strand exchange. HJ branch migration catalyzed by RuvA-RuvB allows RuvC to scan DNA until it finds its consensus sequence, where it cleaves and resolves the cruciform DNA. This is Crossover junction endodeoxyribonuclease RuvC from Halothermothrix orenii (strain H 168 / OCM 544 / DSM 9562).